A 152-amino-acid chain; its full sequence is Protein D1 (152 aa).

It belongs to the phosphatidylethanolamine-binding protein family.

In Onchocerca volvulus, this protein is Protein D1 (D1).